Reading from the N-terminus, the 278-residue chain is Putative transposase for insertion sequence element IS986/IS6110 (278 aa).

Positions 101–268 (GPPAPNRLWV…VPPVELEAAY (168 aa)) constitute an Integrase catalytic domain.

Its function is as follows. Involved in the transposition of the insertion sequence. The chain is Putative transposase for insertion sequence element IS986/IS6110 from Mycobacterium bovis (strain ATCC BAA-935 / AF2122/97).